Here is a 220-residue protein sequence, read N- to C-terminus: Probable metallo-hydrolase YybB (220 aa).

Zn(2+)-binding residues include His-67, His-69, Asp-71, His-72, His-139, Asp-158, and His-200.

This sequence belongs to the metallo-beta-lactamase superfamily. The cofactor is Zn(2+).

The chain is Probable metallo-hydrolase YybB (yybB) from Bacillus subtilis (strain 168).